Here is a 668-residue protein sequence, read N- to C-terminus: Fructose-1,6-bisphosphatase class 3 (668 aa).

Belongs to the FBPase class 3 family. Mn(2+) serves as cofactor.

It carries out the reaction beta-D-fructose 1,6-bisphosphate + H2O = beta-D-fructose 6-phosphate + phosphate. Its pathway is carbohydrate biosynthesis; gluconeogenesis. The chain is Fructose-1,6-bisphosphatase class 3 from Clostridium botulinum (strain 657 / Type Ba4).